The following is a 74-amino-acid chain: Control protein C.MunI (74 aa).

Positions 12 to 67 constitute an HTH cro/C1-type domain; it reads LKKLRKEKTDLSQESFAAQIDLDRTYYSSIENGKRNVSLVNLEKISAGLGITLSEL. Positions 23-42 form a DNA-binding region, H-T-H motif; the sequence is SQESFAAQIDLDRTYYSSIE.

Its function is as follows. Probably controls expression of its associated restriction-modification system MunI. This Mycoplasma sp protein is Control protein C.MunI.